Reading from the N-terminus, the 386-residue chain is uncharacterized protein (386 aa).

The next 9 membrane-spanning stretches (helical) occupy residues 48–68, 78–98, 136–156, 171–191, 213–233, 253–273, 285–305, 316–336, and 344–364; these read NLITLIGLGFVVINILTMLVY, PSWVYASWAIGLFLYQSFDAI, LQLDMFSSILTQFASLLYFYI, YFSGPVEGIVMVIGLFALTAI, FLPYYTYGSCLYNFMAFALLL, VIKALSGILPYFLQWMAVFSL, FLTIFCLNAFIFAYSVGVVIV, WNVLILPFLVDAVDAYTFGVL, and FFCYVGICIGVYGNFVAHVIA.

The protein belongs to the CDP-alcohol phosphatidyltransferase class-I family.

The protein localises to the membrane. This is an uncharacterized protein from Schizosaccharomyces pombe (strain 972 / ATCC 24843) (Fission yeast).